Here is a 440-residue protein sequence, read N- to C-terminus: Glutamyl-tRNA reductase (440 aa).

Substrate contacts are provided by residues 47 to 50, Ser110, 115 to 117, and Gln121; these read TCNR and ERE. The active-site Nucleophile is the Cys48. 192-197 is an NADP(+) binding site; it reads GTGAYA.

This sequence belongs to the glutamyl-tRNA reductase family. In terms of assembly, homodimer.

It carries out the reaction (S)-4-amino-5-oxopentanoate + tRNA(Glu) + NADP(+) = L-glutamyl-tRNA(Glu) + NADPH + H(+). Its pathway is porphyrin-containing compound metabolism; protoporphyrin-IX biosynthesis; 5-aminolevulinate from L-glutamyl-tRNA(Glu): step 1/2. Catalyzes the NADPH-dependent reduction of glutamyl-tRNA(Glu) to glutamate 1-semialdehyde (GSA). The polypeptide is Glutamyl-tRNA reductase (Paenarthrobacter aurescens (strain TC1)).